Consider the following 401-residue polypeptide: Dynactin subunit 2 (401 aa).

The disordered stretch occupies residues 1 to 25; sequence MADPKYADLPGIARNEPDVYETSDL. Alanine 2 carries the N-acetylalanine modification. Residue tyrosine 6 is modified to Phosphotyrosine. Serine 83 is subject to Phosphoserine. Position 86 is a phosphotyrosine (tyrosine 86). Residues 99–132 are a coiled coil; the sequence is PQQKYQRLLHEVQELTTEVEKIKTTVKESATEEK. Phosphothreonine is present on residues threonine 134 and threonine 198. Positions 214-244 form a coiled coil; sequence EQDKFSQAAKVAELEKRLTELETAVRCDQDA. A Phosphoserine modification is found at serine 320. The stretch at 379–399 forms a coiled coil; sequence RENLATVEGNFASIDERMKKL.

The protein belongs to the dynactin subunit 2 family. Subunit of dynactin, a multiprotein complex part of a tripartite complex with dynein and a adapter, such as BICDL1, BICD2 or HOOK3. The dynactin complex is built around ACTR1A/ACTB filament and consists of an actin-related filament composed of a shoulder domain, a pointed end and a barbed end. Its length is defined by its flexible shoulder domain. The soulder is composed of 2 DCTN1 subunits, 4 DCTN2 and 2 DCTN3. The 4 DCNT2 (via N-terminus) bind the ACTR1A filament and act as molecular rulers to determine the length. The pointed end is important for binding dynein-dynactin cargo adapters and consists of 4 subunits: ACTR10, DCNT4, DCTN5 and DCTN6. The barbed end is composed of a CAPZA1:CAPZB heterodimers, which binds ACTR1A/ACTB filament and dynactin and stabilizes dynactin. Interacts with BICD2 and CEP135. Interacts with DYNAP. Interacts with ECPAS. Interacts with MAPRE1.

The protein localises to the cytoplasm. It is found in the cytoskeleton. It localises to the microtubule organizing center. The protein resides in the centrosome. Its subcellular location is the membrane. Functionally, part of the dynactin complex that activates the molecular motor dynein for ultra-processive transport along microtubules. In the dynactin soulder domain, binds the ACTR1A filament and acts as a molecular ruler to determine the length. Modulates cytoplasmic dynein binding to an organelle, and plays a role in prometaphase chromosome alignment and spindle organization during mitosis. Involved in anchoring microtubules to centrosomes. May play a role in synapse formation during brain development. The polypeptide is Dynactin subunit 2 (Homo sapiens (Human)).